A 384-amino-acid polypeptide reads, in one-letter code: Lipoprotein LprN (384 aa).

The signal sequence occupies residues 1–20 (MNRIWLRAIILTASSALLAG). A lipid anchor (N-palmitoyl cysteine) is attached at C21. A lipid anchor (S-diacylglycerol cysteine) is attached at C21.

Post-translationally, lipidated upon expression in E.coli.

Its subcellular location is the cell membrane. Functionally, stimulates the host (mouse) immune response; lipidated protein produced in E.coli stimulates T-cell proliferation in mice previously sensitized with LprN. Spleenocytes from these mice produce increased amounts of TNF-alpha and IFN-gamma, as well as somewhat increased nitric oxide levels, upon subsequent challenge with LprN. Previously sensitized mice infected with M.tuberculosis have an exacerbated disease response, suggesting this lipoprotein may down-regulate the host's immune response. The polypeptide is Lipoprotein LprN (lprN) (Mycobacterium tuberculosis (strain ATCC 25618 / H37Rv)).